The following is a 37-amino-acid chain: Large ribosomal subunit protein bL36c (37 aa).

This sequence belongs to the bacterial ribosomal protein bL36 family.

The protein localises to the plastid. The protein resides in the chloroplast. This Oenothera argillicola (Appalachian evening primrose) protein is Large ribosomal subunit protein bL36c.